A 1336-amino-acid chain; its full sequence is Coiled-coil and C2 domain-containing protein 2A (1336 aa).

Disordered stretches follow at residues M1 to V29 and V70 to I97. The span at K8–R23 shows a compositional bias: basic residues. Residues V70–T89 show a composition bias toward acidic residues. The stretch at L136–Q156 forms a coiled coil. In terms of domain architecture, C2 spans P755–I915.

Probable component of the tectonic-like complex (also named MKS complex), composed of B9d1, B9d2, Cc2d2a, Mks1 and tctn. In terms of tissue distribution, expressed in the antennae of chordotonal neurons and male germ cells (at protein level).

The protein resides in the cytoplasm. The protein localises to the cytoskeleton. It is found in the cilium basal body. It localises to the microtubule organizing center. Its subcellular location is the centrosome. The protein resides in the centriole. Functionally, probable component of the tectonic-like complex (also named MKS complex), a complex localized at the transition zone of primary cilia. Required for ciliary structure and function. In Drosophila melanogaster (Fruit fly), this protein is Coiled-coil and C2 domain-containing protein 2A.